A 959-amino-acid chain; its full sequence is Glutamate receptor 3.4 (959 aa).

The N-terminal stretch at 1 to 35 (MGFLVMIREVSMAKAIRVVLLCVSVLWVVPKECAC) is a signal peptide. Topologically, residues 36 to 613 (RSNFSRNSSS…SPWSFLKPFT (578 aa)) are extracellular. Residues Asn38, Asn42, Asn108, Asn365, Asn378, Asn404, Asn443, Asn461, and Asn576 are each glycosylated (N-linked (GlcNAc...) asparagine). A helical transmembrane segment spans residues 614 to 634 (IEMWAVTGGFFLFVGAMVWIL). At 635–643 (EHRFNQEFR) the chain is on the cytoplasmic side. The helical transmembrane segment at 644-664 (GPPRRQLITIFWFSFSTMFFS) threads the bilayer. The Cytoplasmic portion of the chain corresponds to 665–675 (HRENTVSSLGR). A helical transmembrane segment spans residues 676–696 (FVLIIWLFVVLIINSSYTASL). The Extracellular portion of the chain corresponds to 697 to 857 (TSILTIRQLT…SEDSQLSLKS (161 aa)). Residues 858 to 878 (FWGLFLICGITCFMALTVFFW) form a helical membrane-spanning segment. Residues 879 to 959 (RVFWQYQRLL…TSQSQHGEIT (81 aa)) lie on the Cytoplasmic side of the membrane. 2 disordered regions span residues 893 to 913 (DEER…SRAP) and 936 to 959 (KSSK…GEIT). The span at 943–959 (STQSAAGTSQSQHGEIT) shows a compositional bias: low complexity.

It belongs to the glutamate-gated ion channel (TC 1.A.10.1) family. In terms of assembly, forms a heteromeric channel with GLR3.2. As to expression, highly expressed in roots and at lower levels in leaves and siliques. Expressed in seedlings, cotyledons, roots (e.g. root hairs, epidermis and cortex cells), stems, leaves (e.g. vascular bundles and hydathodes), and siliques. Expressed in root phloem.

It is found in the cell membrane. The protein localises to the plastid. The protein resides in the chloroplast membrane. Functionally, glutamate-gated receptor that probably acts as a non-selective cation channel, at least in hypocotyls. Can be triggered by Asn, Ser, Gly and, to a lower extent, Ala, Cys and Glu. May be involved in light-signal transduction and calcium homeostasis via the regulation of calcium influx into cells. Plays an important role in the calcium-based fast transmission of environmental stress. Acts as a negative regulator of lateral root initiation and development. May restrict primordia numbers and position along the root axis by a signaling process originating in the phloem. AtGLR3.4-mediated cytosolic calcium influx may be involved in the regulation of seed germination under salt stress by modulating sodium accumulation through the SOS pathway. The sequence is that of Glutamate receptor 3.4 from Arabidopsis thaliana (Mouse-ear cress).